A 521-amino-acid polypeptide reads, in one-letter code: Matrix metalloproteinase-A (521 aa).

A signal peptide spans 1 to 21 (MFTGLHDILIILFLLVTLKIA). Residues 22–95 (QNVDHTKFLQ…EDHQKSRGKR (74 aa)) constitute a propeptide, activation peptide. The Cysteine switch motif lies at 78–85 (PRCGHPDV). C80 lines the Zn(2+) pocket. Residues 96–500 (YAPPQFKWKE…FCPRNEKLVL (405 aa)) lie on the Extracellular side of the membrane. N-linked (GlcNAc...) asparagine glycosylation is present at N199. H215 provides a ligand contact to Zn(2+). E216 is an active-site residue. Zn(2+)-binding residues include H219 and H225. The tract at residues 259-298 (KASKKENEEEERKTENEDKRRKTEKDRGRTREHESDDIRP) is disordered. Residues 261 to 298 (SKKENEEEERKTENEDKRRKTEKDRGRTREHESDDIRP) are compositionally biased toward basic and acidic residues. 3 Hemopexin repeats span residues 300–347 (ECRV…FPGL), 391–443 (EKYV…WARV), and 444–492 (PKGV…FGFC). A glycan (N-linked (GlcNAc...) asparagine) is linked at N469. The helical transmembrane segment at 501–521 (NSSSSHFSLIYATITILILIF) threads the bilayer.

The protein belongs to the peptidase M10A family. It depends on Zn(2+) as a cofactor. Expressed in the anchor cell. Expressed in the anchor cell throughout the L3 and the early L4 stage, but not in vulva precursor cells P6.p, P6.px, or P6.pxx. Expression in P6.pxxx cells begins in late-L4 stage. During L4 lethargus, expressed in all four vulE cells, but not in vulF cells. The expression in vulE cells persists in adulthood. In males, expressed in the linker cell (LC) from the early L4 stage until LC death during the L4-to-adult molt.

The protein resides in the cell membrane. Its subcellular location is the basolateral cell membrane. Metalloprotease which, together with cadherin cdh-3 and hemicentin him-4, plays a role in anchor cell (AC) invasion during postembryonic vulval development probably by promoting the degradation of the basement membrane separating the gonad from the vulva epithelium. This Caenorhabditis elegans protein is Matrix metalloproteinase-A.